A 459-amino-acid polypeptide reads, in one-letter code: tRNA modification GTPase MnmE (459 aa).

Positions 23, 86, and 125 each coordinate (6S)-5-formyl-5,6,7,8-tetrahydrofolate. The TrmE-type G domain maps to 221–380 (GLKTVIVGKP…LQDKIESMVY (160 aa)). Position 231 (N231) interacts with K(+). Residues 231-236 (NVGKSS), 250-256 (TDIPGTT), and 275-278 (DTAG) each bind GTP. Residue S235 participates in Mg(2+) binding. K(+)-binding residues include T250, I252, and T255. T256 serves as a coordination point for Mg(2+). A (6S)-5-formyl-5,6,7,8-tetrahydrofolate-binding site is contributed by K459.

Belongs to the TRAFAC class TrmE-Era-EngA-EngB-Septin-like GTPase superfamily. TrmE GTPase family. As to quaternary structure, homodimer. Heterotetramer of two MnmE and two MnmG subunits. The cofactor is K(+).

The protein localises to the cytoplasm. Functionally, exhibits a very high intrinsic GTPase hydrolysis rate. Involved in the addition of a carboxymethylaminomethyl (cmnm) group at the wobble position (U34) of certain tRNAs, forming tRNA-cmnm(5)s(2)U34. The protein is tRNA modification GTPase MnmE of Clostridioides difficile (strain 630) (Peptoclostridium difficile).